A 330-amino-acid chain; its full sequence is Membrane-associated protein VIPP1, chloroplastic (330 aa).

The transit peptide at methionine 1–arginine 64 directs the protein to the chloroplast. Coiled coils occupy residues serine 124–isoleucine 259 and lysine 312–aspartate 329. The disordered stretch occupies residues leucine 287–lysine 312.

It belongs to the PspA/Vipp/IM30 family. In terms of assembly, homomultimer. Complex formation involves interaction via the central alpha-helical domain (71-286).

The protein localises to the plastid. It is found in the chloroplast inner membrane. The protein resides in the chloroplast thylakoid membrane. Its function is as follows. Required for plastid vesicle formation and thylakoid membrane biogenesis, but not for functional assembly of thylakoid protein complexes. This chain is Membrane-associated protein VIPP1, chloroplastic, found in Arabidopsis thaliana (Mouse-ear cress).